The sequence spans 72 residues: Large ribosomal subunit protein uL29 (72 aa).

The protein belongs to the universal ribosomal protein uL29 family.

This Treponema pallidum (strain Nichols) protein is Large ribosomal subunit protein uL29 (rpmC).